The primary structure comprises 206 residues: Large ribosomal subunit protein uL4 (206 aa).

The segment at 43-78 (NQRQGTHDTKTRAEVRGGGRKPWRQKGTGRARAGSS) is disordered. Basic and acidic residues predominate over residues 47–59 (GTHDTKTRAEVRG). Over residues 60 to 71 (GGRKPWRQKGTG) the composition is skewed to basic residues.

The protein belongs to the universal ribosomal protein uL4 family. As to quaternary structure, part of the 50S ribosomal subunit.

Functionally, one of the primary rRNA binding proteins, this protein initially binds near the 5'-end of the 23S rRNA. It is important during the early stages of 50S assembly. It makes multiple contacts with different domains of the 23S rRNA in the assembled 50S subunit and ribosome. Its function is as follows. Forms part of the polypeptide exit tunnel. This is Large ribosomal subunit protein uL4 from Desulforamulus reducens (strain ATCC BAA-1160 / DSM 100696 / MI-1) (Desulfotomaculum reducens).